Consider the following 244-residue polypeptide: AA9 family lytic polysaccharide monooxygenase B (244 aa).

The N-terminal stretch at 1–19 (MFLVPLLAALSLSAPKVAA) is a signal peptide. His20 is a Cu(2+) binding site. A (1,4-beta-D-glucosyl)n-binding site is contributed by Tyr39. Cystine bridges form between Cys68/Cys189 and Cys111/Cys115. His99 lines the Cu(2+) pocket. Residue Asn152 is glycosylated (N-linked (GlcNAc...) asparagine). O2 contacts are provided by His178 and Gln184. Position 186 (Tyr186) interacts with Cu(2+). Asp224, Tyr226, and Glu229 together coordinate (1,4-beta-D-glucosyl)n. N-linked (GlcNAc...) asparagine glycosylation is present at Asn233.

The protein belongs to the polysaccharide monooxygenase AA9 family. Cu(2+) is required as a cofactor.

The protein localises to the secreted. The enzyme catalyses [(1-&gt;4)-beta-D-glucosyl]n+m + reduced acceptor + O2 = 4-dehydro-beta-D-glucosyl-[(1-&gt;4)-beta-D-glucosyl]n-1 + [(1-&gt;4)-beta-D-glucosyl]m + acceptor + H2O.. Functionally, lytic polysaccharide monooxygenase (LPMO) that depolymerizes crystalline and amorphous polysaccharides via the oxidation of scissile alpha- or beta-(1-4)-glycosidic bonds, yielding specifically C1 oxidation product. Catalysis by LPMOs requires the reduction of the active-site copper from Cu(II) to Cu(I) by a reducing agent and H(2)O(2) or O(2) as a cosubstrate. Displays catalytic activity on insoluble cellulose using I-beta microfibril model substrate. The sequence is that of AA9 family lytic polysaccharide monooxygenase B from Heterobasidion irregulare (strain TC 32-1).